A 936-amino-acid chain; its full sequence is Protocadherin gamma-A10 (936 aa).

A signal peptide spans 1 to 32; it reads MAAQRNRSKESKDCSGLVLLCLFFGIPWEAGA. Cadherin domains lie at 33 to 137, 138 to 246, 247 to 351, 352 to 456, 457 to 566, and 574 to 687; these read RQIS…APTF, QAEN…APVF, TLPE…SPEL, TITS…PPTF, SQVS…APEI, and DGST…SPAN. Residues 33–696 are Extracellular-facing; that stretch reads RQISYSIPEE…NSETSDLTLY (664 aa). Asn-51 carries an N-linked (GlcNAc...) asparagine glycan. Asn-423 and Asn-549 each carry an N-linked (GlcNAc...) asparagine glycan. Residues 697–717 traverse the membrane as a helical segment; it reads LVVAVAAVSCVFLAFVIVLLA. The Cytoplasmic portion of the chain corresponds to 718–936; sequence LRLRRWHKSR…KKKSGKKEKK (219 aa). 2 disordered regions span residues 801–845 and 906–936; these read SKFP…WPNN and ATLT…KEKK. The span at 820–845 shows a compositional bias: polar residues; it reads WRFSQAQRPGTSGSQNGDDTGTWPNN. The span at 926-936 shows a compositional bias: basic residues; sequence NKKKSGKKEKK.

Its subcellular location is the cell membrane. Potential calcium-dependent cell-adhesion protein. May be involved in the establishment and maintenance of specific neuronal connections in the brain. This chain is Protocadherin gamma-A10 (PCDHGA10), found in Pan troglodytes (Chimpanzee).